We begin with the raw amino-acid sequence, 186 residues long: Elongation factor P (186 aa).

Belongs to the elongation factor P family.

It is found in the cytoplasm. It participates in protein biosynthesis; polypeptide chain elongation. Its function is as follows. Involved in peptide bond synthesis. Stimulates efficient translation and peptide-bond synthesis on native or reconstituted 70S ribosomes in vitro. Probably functions indirectly by altering the affinity of the ribosome for aminoacyl-tRNA, thus increasing their reactivity as acceptors for peptidyl transferase. The polypeptide is Elongation factor P (Prochlorococcus marinus subsp. pastoris (strain CCMP1986 / NIES-2087 / MED4)).